The chain runs to 553 residues: Heterochromatin protein 1-binding protein 3 (553 aa).

At Ala-2 the chain carries N-acetylalanine. Residue Ser-6 is modified to Phosphoserine. The segment at 30-131 is disordered; that stretch reads LGEKADDSTM…SKEKEKKVKK (102 aa). Phosphothreonine is present on Thr-51. The span at 60 to 71 shows a compositional bias: acidic residues; it reads GEEEKPEPDGSS. Lys-64 participates in a covalent cross-link: Glycyl lysine isopeptide (Lys-Gly) (interchain with G-Cter in SUMO2). At Thr-85 the chain carries Phosphothreonine. Residues 91–127 are compositionally biased toward basic and acidic residues; it reads REAEQPKGEPESGEKEESKSAEETKKEEKDQSKEKEK. Residue Lys-97 forms a Glycyl lysine isopeptide (Lys-Gly) (interchain with G-Cter in SUMO2) linkage. A phosphoserine mark is found at Ser-142, Ser-155, and Ser-156. The region spanning 157 to 232 is the H15 1 domain; that stretch reads PRPKMDAILT…GASGSFVVVQ (76 aa). Lys-190 bears the N6-acetyllysine mark. The tract at residues 231–251 is disordered; that stretch reads VQKSKTPQKSKNRKKGSAVDP. The segment covering 236-246 has biased composition (basic residues); it reads TPQKSKNRKKG. Ser-247 carries the post-translational modification Phosphoserine. Residues 253-257 carry the PxVxL motif motif; the sequence is PQVKL. H15 domains lie at 253–328 and 335–411; these read PQVK…QLKK and LGGS…QLCF. A Glycyl lysine isopeptide (Lys-Gly) (interchain with G-Cter in SUMO2) cross-link involves residue Lys-256. The segment at 422–553 is disordered; it reads PKKVSDGSED…MKKKSFKTKK (132 aa). Acidic residues predominate over residues 428–449; sequence GSEDEDEEEDEEESSEDSEDEE. 3 positions are modified to phosphoserine: Ser-441, Ser-442, and Ser-445. Composition is skewed to basic residues over residues 488–509 and 542–553; these read GKVR…RKGR and SAMKKKSFKTKK.

In terms of assembly, interacts (via PxVxL motif) with CBX5.

It localises to the nucleus. The protein resides in the chromosome. Component of heterochromatin that maintains heterochromatin integrity during G1/S progression and regulates the duration of G1 phase to critically influence cell proliferative capacity. May play a role in hypoxia-induced oncogenesis. This is Heterochromatin protein 1-binding protein 3 (Hp1bp3) from Rattus norvegicus (Rat).